The following is a 725-amino-acid chain: Methionine--tRNA ligase (725 aa).

Positions 27–37 (PYANGQIHIGH) match the 'HIGH' region motif. The Zn(2+) site is built by Cys158, Cys161, Cys171, and Cys174. The 'KMSKS' region signature appears at 348–352 (KMSKS). Position 351 (Lys351) interacts with ATP. One can recognise a tRNA-binding domain in the interval 619 to 725 (DFAKIDLRIA…SGAKPGMRVK (107 aa)).

It belongs to the class-I aminoacyl-tRNA synthetase family. MetG type 1 subfamily. Homodimer. The cofactor is Zn(2+).

It localises to the cytoplasm. It catalyses the reaction tRNA(Met) + L-methionine + ATP = L-methionyl-tRNA(Met) + AMP + diphosphate. In terms of biological role, is required not only for elongation of protein synthesis but also for the initiation of all mRNA translation through initiator tRNA(fMet) aminoacylation. The protein is Methionine--tRNA ligase of Burkholderia pseudomallei (strain 1710b).